Reading from the N-terminus, the 334-residue chain is Holliday junction branch migration complex subunit RuvB (334 aa).

The large ATPase domain (RuvB-L) stretch occupies residues 4–184; it reads ADRLIQPQDL…FGIPLRLEFY (181 aa). ATP is bound by residues arginine 24, glycine 65, lysine 68, threonine 69, threonine 70, 131-133, arginine 174, tyrosine 184, and arginine 221; that span reads EDY. Residue threonine 69 participates in Mg(2+) binding. Residues 185-255 are small ATPAse domain (RuvB-S); it reads NVRDLSSIVA…VAQSALDLLD (71 aa). Residues 258 to 334 are head domain (RuvB-H); that stretch reads SEGFDYMDRK…YSHFDLIKPD (77 aa). DNA contacts are provided by arginine 294, arginine 313, and arginine 318.

It belongs to the RuvB family. As to quaternary structure, homohexamer. Forms an RuvA(8)-RuvB(12)-Holliday junction (HJ) complex. HJ DNA is sandwiched between 2 RuvA tetramers; dsDNA enters through RuvA and exits via RuvB. An RuvB hexamer assembles on each DNA strand where it exits the tetramer. Each RuvB hexamer is contacted by two RuvA subunits (via domain III) on 2 adjacent RuvB subunits; this complex drives branch migration. In the full resolvosome a probable DNA-RuvA(4)-RuvB(12)-RuvC(2) complex forms which resolves the HJ.

It is found in the cytoplasm. The catalysed reaction is ATP + H2O = ADP + phosphate + H(+). In terms of biological role, the RuvA-RuvB-RuvC complex processes Holliday junction (HJ) DNA during genetic recombination and DNA repair, while the RuvA-RuvB complex plays an important role in the rescue of blocked DNA replication forks via replication fork reversal (RFR). RuvA specifically binds to HJ cruciform DNA, conferring on it an open structure. The RuvB hexamer acts as an ATP-dependent pump, pulling dsDNA into and through the RuvAB complex. RuvB forms 2 homohexamers on either side of HJ DNA bound by 1 or 2 RuvA tetramers; 4 subunits per hexamer contact DNA at a time. Coordinated motions by a converter formed by DNA-disengaged RuvB subunits stimulates ATP hydrolysis and nucleotide exchange. Immobilization of the converter enables RuvB to convert the ATP-contained energy into a lever motion, pulling 2 nucleotides of DNA out of the RuvA tetramer per ATP hydrolyzed, thus driving DNA branch migration. The RuvB motors rotate together with the DNA substrate, which together with the progressing nucleotide cycle form the mechanistic basis for DNA recombination by continuous HJ branch migration. Branch migration allows RuvC to scan DNA until it finds its consensus sequence, where it cleaves and resolves cruciform DNA. The chain is Holliday junction branch migration complex subunit RuvB from Shewanella amazonensis (strain ATCC BAA-1098 / SB2B).